The following is a 323-amino-acid chain: Annexin A3 (323 aa).

An N-acetylalanine modification is found at A2. Annexin repeat units follow at residues 18 to 89, 90 to 161, 173 to 245, and 249 to 320; these read FSPS…ALVT, APAL…TLAD, HLAK…AIVH, and NTPA…KICG. K177 is subject to N6-acetyllysine. A Phosphothreonine modification is found at T267.

This sequence belongs to the annexin family.

Inhibitor of phospholipase A2, also possesses anti-coagulant properties. The protein is Annexin A3 (Anxa3) of Mus musculus (Mouse).